Reading from the N-terminus, the 421-residue chain is Medium-chain specific acyl-CoA dehydrogenase, mitochondrial (421 aa).

A mitochondrion-targeting transit peptide spans 1–25; the sequence is MAAGFGRCCRVLRSISRFQWRSQHT. At Lys69 the chain carries N6-acetyllysine; alternate. Residue Lys69 is modified to N6-succinyllysine; alternate. Residue 158–167 participates in FAD binding; it reads YCVTEPGAGS. Octanoyl-CoA is bound at residue Ser167. Lys179 carries the N6-succinyllysine modification. FAD is bound at residue 191–193; that stretch reads WIT. Lys212, Lys217, and Lys271 each carry N6-acetyllysine; alternate. N6-succinyllysine; alternate occurs at positions 212, 217, and 271. Position 278 (Asp278) interacts with octanoyl-CoA. Lys279 carries the N6-acetyllysine modification. Position 281 (Arg281) interacts with octanoyl-CoA. Lys301 bears the N6-acetyllysine mark. FAD-binding positions include 306 to 308 and 316 to 317; these read RKT and HQ. Residues Arg349 and Thr351 each coordinate octanoyl-CoA. Residue Thr351 is modified to Phosphothreonine. 374–378 lines the FAD pocket; that stretch reads QILGG. Glu401 is an octanoyl-CoA binding site. Glu401 (proton acceptor) is an active-site residue. 402 to 405 serves as a coordination point for FAD; sequence GTSQ.

This sequence belongs to the acyl-CoA dehydrogenase family. As to quaternary structure, homotetramer. Interacts with the heterodimeric electron transfer flavoprotein ETF. It depends on FAD as a cofactor. Post-translationally, acetylated. Could occur at proximity of the cofactor-binding sites and reduce the catalytic activity. Could be deacetylated by SIRT3.

Its subcellular location is the mitochondrion matrix. The catalysed reaction is a medium-chain 2,3-saturated fatty acyl-CoA + oxidized [electron-transfer flavoprotein] + H(+) = a medium-chain (2E)-enoyl-CoA + reduced [electron-transfer flavoprotein]. It catalyses the reaction pentanoyl-CoA + oxidized [electron-transfer flavoprotein] + H(+) = (2E)-pentenoyl-CoA + reduced [electron-transfer flavoprotein]. The enzyme catalyses hexanoyl-CoA + oxidized [electron-transfer flavoprotein] + H(+) = (2E)-hexenoyl-CoA + reduced [electron-transfer flavoprotein]. It carries out the reaction octanoyl-CoA + oxidized [electron-transfer flavoprotein] + H(+) = (2E)-octenoyl-CoA + reduced [electron-transfer flavoprotein]. The catalysed reaction is decanoyl-CoA + oxidized [electron-transfer flavoprotein] + H(+) = (2E)-decenoyl-CoA + reduced [electron-transfer flavoprotein]. It catalyses the reaction dodecanoyl-CoA + oxidized [electron-transfer flavoprotein] + H(+) = (2E)-dodecenoyl-CoA + reduced [electron-transfer flavoprotein]. The enzyme catalyses tetradecanoyl-CoA + oxidized [electron-transfer flavoprotein] + H(+) = (2E)-tetradecenoyl-CoA + reduced [electron-transfer flavoprotein]. It carries out the reaction oxidized [electron-transfer flavoprotein] + hexadecanoyl-CoA + H(+) = (2E)-hexadecenoyl-CoA + reduced [electron-transfer flavoprotein]. It participates in lipid metabolism; mitochondrial fatty acid beta-oxidation. Medium-chain specific acyl-CoA dehydrogenase is one of the acyl-CoA dehydrogenases that catalyze the first step of mitochondrial fatty acid beta-oxidation, an aerobic process breaking down fatty acids into acetyl-CoA and allowing the production of energy from fats. The first step of fatty acid beta-oxidation consists in the removal of one hydrogen from C-2 and C-3 of the straight-chain fatty acyl-CoA thioester, resulting in the formation of trans-2-enoyl-CoA. Electron transfer flavoprotein (ETF) is the electron acceptor that transfers electrons to the main mitochondrial respiratory chain via ETF-ubiquinone oxidoreductase (ETF dehydrogenase). Among the different mitochondrial acyl-CoA dehydrogenases, medium-chain specific acyl-CoA dehydrogenase acts specifically on acyl-CoAs with saturated 6 to 12 carbons long primary chains. This chain is Medium-chain specific acyl-CoA dehydrogenase, mitochondrial, found in Pan troglodytes (Chimpanzee).